A 298-amino-acid polypeptide reads, in one-letter code: Inosose dehydratase (298 aa).

It belongs to the IolE/MocC family. The cofactor is glutathione. Co(2+) serves as cofactor. Requires Mn(2+) as cofactor.

It catalyses the reaction scyllo-inosose = 3D-3,5/4-trihydroxycyclohexane-1,2-dione + H2O. It participates in polyol metabolism; myo-inositol degradation into acetyl-CoA; acetyl-CoA from myo-inositol: step 2/7. Its function is as follows. Catalyzes the dehydration of inosose (2-keto-myo-inositol, 2KMI or 2,4,6/3,5-pentahydroxycyclohexanone) to 3D-(3,5/4)-trihydroxycyclohexane-1,2-dione (D-2,3-diketo-4-deoxy-epi-inositol). The sequence is that of Inosose dehydratase from Geobacillus thermodenitrificans (strain NG80-2).